We begin with the raw amino-acid sequence, 376 residues long: Chaperone protein DnaJ (376 aa).

One can recognise a J domain in the interval 5–70; that stretch reads DYYEVLGVAK…QKRAAYDQYG (66 aa). A CR-type zinc finger spans residues 136–214; sequence GYDTQIRVPS…CHGSGKVKET (79 aa). Residues C149, C152, C166, C169, C188, C191, C202, and C205 each coordinate Zn(2+). 4 CXXCXGXG motif repeats span residues 149–156, 166–173, 188–195, and 202–209; these read CGVCHGSG, CPTCHGQG, CPKCHGTG, and CVHCHGSG.

Belongs to the DnaJ family. Homodimer. Zn(2+) is required as a cofactor.

It localises to the cytoplasm. Its function is as follows. Participates actively in the response to hyperosmotic and heat shock by preventing the aggregation of stress-denatured proteins and by disaggregating proteins, also in an autonomous, DnaK-independent fashion. Unfolded proteins bind initially to DnaJ; upon interaction with the DnaJ-bound protein, DnaK hydrolyzes its bound ATP, resulting in the formation of a stable complex. GrpE releases ADP from DnaK; ATP binding to DnaK triggers the release of the substrate protein, thus completing the reaction cycle. Several rounds of ATP-dependent interactions between DnaJ, DnaK and GrpE are required for fully efficient folding. Also involved, together with DnaK and GrpE, in the DNA replication of plasmids through activation of initiation proteins. The protein is Chaperone protein DnaJ of Burkholderia pseudomallei (strain 1710b).